The primary structure comprises 64 residues: Large ribosomal subunit protein uL29 (64 aa).

Belongs to the universal ribosomal protein uL29 family.

The protein is Large ribosomal subunit protein uL29 of Lacticaseibacillus paracasei (strain ATCC 334 / BCRC 17002 / CCUG 31169 / CIP 107868 / KCTC 3260 / NRRL B-441) (Lactobacillus paracasei).